Reading from the N-terminus, the 154-residue chain is Myoglobin (154 aa).

The region spanning 2 to 148 (GLSDGEWQIV…FRNDIAAKYK (147 aa)) is the Globin domain. Ser4 carries the post-translational modification Phosphoserine. His65 provides a ligand contact to nitrite. Residue His65 participates in O2 binding. Thr68 is subject to Phosphothreonine. His94 is a binding site for heme b.

It belongs to the globin family. Monomeric.

It is found in the cytoplasm. Its subcellular location is the sarcoplasm. The catalysed reaction is Fe(III)-heme b-[protein] + nitric oxide + H2O = Fe(II)-heme b-[protein] + nitrite + 2 H(+). It carries out the reaction H2O2 + AH2 = A + 2 H2O. Functionally, monomeric heme protein which primary function is to store oxygen and facilitate its diffusion within muscle tissues. Reversibly binds oxygen through a pentacoordinated heme iron and enables its timely and efficient release as needed during periods of heightened demand. Depending on the oxidative conditions of tissues and cells, and in addition to its ability to bind oxygen, it also has a nitrite reductase activity whereby it regulates the production of bioactive nitric oxide. Under stress conditions, like hypoxia and anoxia, it also protects cells against reactive oxygen species thanks to its pseudoperoxidase activity. This chain is Myoglobin (MB), found in Lycaon pictus (African wild dog).